Consider the following 1596-residue polypeptide: Transcription factor Zelda (1596 aa).

3 disordered regions span residues 1 to 143 (MTSI…QQQQ), 209 to 273 (SGLG…GGAA), and 490 to 530 (TSPA…SVLP). Over residues 13–24 (AAEALASSSATD) the composition is skewed to low complexity. Over residues 25–53 (SGGGGAGGGGGGGGGGSGGPGAGGTGGVG) the composition is skewed to gly residues. Positions 60–72 (NATISAAADSSDN) are enriched in polar residues. Composition is skewed to low complexity over residues 73 to 123 (QPGT…ITHQ) and 226 to 267 (SAPS…QTPG). Residues 501–518 (GGPGQEGAAGAAPGGGYR) show a composition bias toward gly residues. The C2H2-type 1 zinc finger occupies 552–576 (YNCTACNKWFTSSGHLKRHYNTTLH). 4 disordered regions span residues 578 to 813 (NAVK…TTTA), 825 to 945 (EDSN…MGML), 1017 to 1074 (GEQH…MPLT), and 1252 to 1322 (QMQH…TTLP). A compositionally biased stretch (low complexity) spans 610 to 634 (RGNAAAAAAAAAAAASASGQGQQQQ). The segment covering 635-653 (PPIPPPPANVPPPEPPRSP) has biased composition (pro residues). Positions 656–668 (YGGGGGLGVGAMG) are enriched in gly residues. Positions 673–682 (SQYSASPSPT) are enriched in polar residues. Composition is skewed to low complexity over residues 683 to 709 (QQQQ…GYGY) and 719 to 753 (NASP…HHNS). The span at 768–781 (PHNNNTTQMPSSQM) shows a compositional bias: polar residues. Positions 796–813 (TTTRAPQITTTATTTTTA) are enriched in low complexity. Positions 830-840 (THTHTHTHPNH) are enriched in basic residues. A compositionally biased stretch (low complexity) spans 849–858 (SSSSSSSMAT). The segment covering 864–877 (QELRDQEQADDHLH) has biased composition (basic and acidic residues). Positions 879 to 916 (HQQASQQYLLSARHYHSSTPNTLSSSNTNPSTPSSNSP) are enriched in low complexity. Positions 904-1297 (SNTNPSTPSS…PLAKKRRGGN (394 aa)) are transactivation activation domain (TAD). Polar residues predominate over residues 921–932 (RQEQQGTDFSRT). A compositionally biased stretch (pro residues) spans 933 to 944 (TPPPQPLPPMGM). Residues 1019–1036 (QHQRQEADHHQQQRELHQ) show a composition bias toward basic and acidic residues. 2 stretches are compositionally biased toward low complexity: residues 1037 to 1062 (LDQQ…SPTS) and 1252 to 1275 (QMQH…QQQQ). 2 stretches are compositionally biased toward polar residues: residues 1276–1286 (ILADQTQTMAQ) and 1309–1322 (SSVG…TTLP). A C2H2-type 2 zinc finger spans residues 1326-1349 (IKCLECDKEFTKNCYLTQHNKSFH). A C2H2-type 3; degenerate zinc finger spans residues 1355 to 1378 (FRCQKCGKRFQSEDVYTTHLGRHR). 2 C2H2-type zinc fingers span residues 1384-1407 (HKCE…EAIH) and 1413-1435 (HMCD…LETH).

In terms of tissue distribution, zygotically expressed in the developing embryonic germ layers, nervous system, imaginal disk primordia and in larval wing and eye disks. Detected in the germline cells of the ovary, in unfertilized eggs and throughout early development. Later, it becomes mostly restricted to the nervous system and specific head regions. Also expressed in imaginal wing disks in third instar larvae.

Its subcellular location is the nucleus. It is found in the chromosome. Functionally, transcription factor required for zygotic genome activation (ZGA), a critical event in early embryonic development during which the developmental control passes from maternally provided mRNAs to the expression of the zygotic genome after fertilization. Binds to regulatory DNA sequences containing a 5'-CAGGTAG-3' sequence motif, which are highly enriched among developmental enhancers. Within 1 hour into development, or by the embryo's 8th nuclear cycle, binds the majority of its motifs genome-wide. Zelda-binding promotes nucleosome depletion and chromatin accessibility, thereby facilitating the binding of patterning transcription factors, including the binding of the dorsoventral patterning transcription factors dorsal (dl) and twist (twi), and the anteroposterior patterning transcription factors bicoid (bcd) and caudal (cad). Promotes the activity of patterning transcription factors, such as bcd and dl, by lowering the concentration threshold required for transcriptional activation. Required both for the earliest (minor) and major waves of transcription during ZGA. Also involved in maternal mRNA clearance during the maternal-to-zygote transition by promoting expression of microRNAs (miRNAs), such as miR-1, miR-9a and miR-309, which mediate degradation of maternally-loaded RNAs. Also involved in post-blastoderm development: nvolved in nervous system development by maintaining neuroblasts in an undifferentiated state and equired for wing disk development. In terms of biological role, constitutes the main isoform expressed throughout development. Transcription factor required for zygotic genome activation (ZGA). Acts as a dominant negative inhibitor of transcription factor activity of isoform A. The sequence is that of Transcription factor Zelda from Drosophila melanogaster (Fruit fly).